The chain runs to 265 residues: Protein Exd1 homolog (265 aa).

The 3'-5' exonuclease domain occupies 32-82 (EKQLDRIVLIYQVDTTYHSALKDIKDQKIISLLVEPSFYGRHHPTSILVVA).

It belongs to the EXD1 family. In terms of assembly, homodimer.

Functionally, RNA-binding protein. Inactive exonuclease. In Drosophila melanogaster (Fruit fly), this protein is Protein Exd1 homolog.